The sequence spans 491 residues: UDP-N-acetylmuramate--L-alanine ligase (491 aa).

126–132 contacts ATP; that stretch reads GTHGKTT.

This sequence belongs to the MurCDEF family.

It is found in the cytoplasm. It catalyses the reaction UDP-N-acetyl-alpha-D-muramate + L-alanine + ATP = UDP-N-acetyl-alpha-D-muramoyl-L-alanine + ADP + phosphate + H(+). Its pathway is cell wall biogenesis; peptidoglycan biosynthesis. Functionally, cell wall formation. This chain is UDP-N-acetylmuramate--L-alanine ligase, found in Escherichia coli (strain SE11).